We begin with the raw amino-acid sequence, 250 residues long: Octanoyltransferase (250 aa).

In terms of domain architecture, BPL/LPL catalytic spans 49–230; sequence DEINDVILVL…ALDDAFAGRL (182 aa). Substrate-binding positions include 87-94, 160-162, and 173-175; these read RGGRITWH, ALG, and GLA. Catalysis depends on C191, which acts as the Acyl-thioester intermediate.

This sequence belongs to the LipB family.

Its subcellular location is the cytoplasm. It catalyses the reaction octanoyl-[ACP] + L-lysyl-[protein] = N(6)-octanoyl-L-lysyl-[protein] + holo-[ACP] + H(+). The protein operates within protein modification; protein lipoylation via endogenous pathway; protein N(6)-(lipoyl)lysine from octanoyl-[acyl-carrier-protein]: step 1/2. Its function is as follows. Catalyzes the transfer of endogenously produced octanoic acid from octanoyl-acyl-carrier-protein onto the lipoyl domains of lipoate-dependent enzymes. Lipoyl-ACP can also act as a substrate although octanoyl-ACP is likely to be the physiological substrate. This is Octanoyltransferase from Corynebacterium diphtheriae (strain ATCC 700971 / NCTC 13129 / Biotype gravis).